Consider the following 257-residue polypeptide: UPF0246 protein Rpic_2164 (257 aa).

The protein belongs to the UPF0246 family.

In Ralstonia pickettii (strain 12J), this protein is UPF0246 protein Rpic_2164.